Reading from the N-terminus, the 76-residue chain is Theta defensin subunit A (76 aa).

The N-terminal stretch at 1-22 (MRTFALLTAMLLLVALHAQAEA) is a signal peptide. The propeptide occupies 23 to 64 (RQARADEAAAQQQPGADDQGMAHSFTWPENAALPLSESAKGL). The segment at 25–45 (ARADEAAAQQQPGADDQGMAH) is disordered. Residues 30–44 (AAAQQQPGADDQGMA) are compositionally biased toward low complexity. Residue arginine 65 forms a Cyclopeptide (Arg-Cys) (interchain with C-73 in subunit A); in form BTD-3 linkage. A Cyclopeptide (Arg-Cys) (interchain with C-73 in subunit B); in form BTD-1 cross-link involves residue arginine 65. Residue arginine 65 forms a Cyclopeptide (Arg-Cys) (interchain with C-73 in subunit C); in form BTD-4 linkage. Residue arginine 65 forms a Cyclopeptide (Arg-Cys) (interchain with C-73 in subunit D); in form BTD-7 linkage. Cysteine 68 and cysteine 73 are oxidised to a cystine. Cysteine 73 participates in a covalent cross-link: Cyclopeptide (Cys-Arg) (interchain with R-65 in subunit A); in form BTD-3. Residue cysteine 73 forms a Cyclopeptide (Cys-Arg) (interchain with R-65 in subunit B); in form BTD-1 linkage. Cysteine 73 is covalently cross-linked (Cyclopeptide (Cys-Arg) (interchain with R-65 in subunit C); in form BTD-4). Cysteine 73 participates in a covalent cross-link: Cyclopeptide (Cys-Arg) (interchain with R-65 in subunit D); in form BTD-7. The propeptide occupies 74 to 76 (RLL).

This sequence belongs to the alpha-defensin family. Theta subfamily. In terms of assembly, BTD-1 is a cyclic heterodimer composed of subunits A and B; disulfide-linked. BTD-3 is a cyclic homodimer composed of two subunits A; disulfide-linked. BTD-4 is a cyclic heterodimer composed of subunits A and C; disulfide-linked. BTD-7 is a cyclic heterodimer composed of subunits A and D; disulfide-linked. In terms of processing, forms a cyclic peptide with subunit B (BTD-1), subunit A (BTD-3), subunit C (BTD-4), or subunit D (BTD-7). An additional intersubunit disulfide bond is formed.

In terms of biological role, BTD-1, BTD-3, BTD-4 and BTD-7 have antimicrobial activity against the Gram-negative bacterium E.coli ML35, the Gram-positive bacterium S.aureus 502a, and the fungus C.albicans 16820. BTD-3 is more effective against E.coli than BTD-1, BTD-4 and BTD-7. This Papio anubis (Olive baboon) protein is Theta defensin subunit A (BTDA).